The primary structure comprises 183 residues: Ankyrin repeat domain-containing protein 39 (183 aa).

ANK repeat units follow at residues 30-59, 63-92, 96-125, and 129-158; these read DFERGIWSAALNGDLGRVKYLIQKAVDPSQ, AGYTALHYASRNGHYAVCQFLLESGAKCDA, GGATALHRASYCGHTDIARLLLSHGSNPRL, and DGMTSLHKAAEKGHVDICSLLLQHSPALKA. Serine 153 is modified (phosphoserine).

This sequence belongs to the ANKRD39 family.

In Bos taurus (Bovine), this protein is Ankyrin repeat domain-containing protein 39 (ANKRD39).